A 181-amino-acid chain; its full sequence is MAQTGNFKSPARMSSLGQGAAPASSGAVTGGKPREGGLKGVDFERRGFLHKIVGGVGAVVAVSTLYPVVKYIIPPARKIKNVDELTVGKASEVPDGKSKIFQFNEDKVIVVNKGGALTAVSAVCTHLGCLVNWVDADNQYFCPCHGAKYKLTGEIISGPQPLPLKQYKARIEGDSIIISKA.

The disordered stretch occupies residues 1–35 (MAQTGNFKSPARMSSLGQGAAPASSGAVTGGKPRE). The next 2 membrane-spanning stretches (helical) occupy residues 53 to 73 (VGGV…KYII) and 114 to 134 (GGAL…VNWV). The 94-residue stretch at 85–178 (LTVGKASEVP…ARIEGDSIII (94 aa)) folds into the Rieske domain. Residues cysteine 124, histidine 126, cysteine 142, and histidine 145 each coordinate [2Fe-2S] cluster. Residues cysteine 129 and cysteine 144 are joined by a disulfide bond.

It belongs to the Rieske iron-sulfur protein family. [2Fe-2S] cluster is required as a cofactor.

It is found in the cell inner membrane. It catalyses the reaction 2 oxidized [plastocyanin] + a plastoquinol + 2 H(+)(in) = 2 reduced [plastocyanin] + a plastoquinone + 4 H(+)(out). Functionally, component of the green S-bacteria bc-complex which consists of the Rieske protein and cytochrome b subunit and which appears to lack a cytochrome c1-equivalent. This complex has a comparatively low redox potential. This Chlorobaculum thiosulfatiphilum (Chlorobium limicola f.sp. thiosulfatophilum) protein is Cytochrome b6-f complex iron-sulfur subunit (petC).